Consider the following 276-residue polypeptide: Halorhodopsin (276 aa).

The propeptide occupies 1 to 21; that stretch reads MTAVSTTATTVLQATQSDVLQ. Over 22-25 the chain is Extracellular; it reads EIQS. Residues 26–51 traverse the membrane as a helical segment; that stretch reads NFLLNSSIWVNIALAGVVILLFVAMG. Over 52-57 the chain is Cytoplasmic; that stretch reads RDLESP. Residues 58–81 form a helical membrane-spanning segment; sequence RAKLIWVATMLVPLVSISSYAGLA. Topologically, residues 82 to 105 are extracellular; the sequence is SGLTVGFLQMPPGHALAGQEVLSP. Residues 106-127 traverse the membrane as a helical segment; the sequence is WGRYLTWTFSTPMILLALGLLA. Over 128-130 the chain is Cytoplasmic; sequence DTD. Residues 131 to 154 form a helical membrane-spanning segment; the sequence is IASLFTAITMDIGMCVTGLAAALI. Topologically, residues 155–157 are extracellular; sequence TSS. A helical transmembrane segment spans residues 158–180; that stretch reads HLLRWVFYGISCAFFVAVLYVLL. The Cytoplasmic segment spans residues 181–192; that stretch reads VQWPADAEAAGT. Residues 193-216 form a helical membrane-spanning segment; it reads SEIFGTLKILTVVLWLGYPILWAL. At 217–225 the chain is on the extracellular side; that stretch reads GSEGVALLS. Residues 226–254 traverse the membrane as a helical segment; the sequence is VGVTSWGYSGLDILAKYVFAFLLLRWVAA. N6-(retinylidene)lysine is present on K241. Topologically, residues 255-276 are cytoplasmic; the sequence is NEGTVSGSGMGIGSGGAAPADD.

This sequence belongs to the archaeal/bacterial/fungal opsin family.

It is found in the cell membrane. Its function is as follows. Light-driven anion pump. The polypeptide is Halorhodopsin (Halobacterium halobium (strain shark)).